Consider the following 89-residue polypeptide: Small ribosomal subunit protein uS15 (89 aa).

Basic and acidic residues predominate over residues methionine 1 to aspartate 21. Positions methionine 1–serine 24 are disordered.

The protein belongs to the universal ribosomal protein uS15 family. Part of the 30S ribosomal subunit. Forms a bridge to the 50S subunit in the 70S ribosome, contacting the 23S rRNA.

Functionally, one of the primary rRNA binding proteins, it binds directly to 16S rRNA where it helps nucleate assembly of the platform of the 30S subunit by binding and bridging several RNA helices of the 16S rRNA. Forms an intersubunit bridge (bridge B4) with the 23S rRNA of the 50S subunit in the ribosome. This is Small ribosomal subunit protein uS15 from Enterococcus faecalis (strain ATCC 700802 / V583).